The chain runs to 300 residues: MNAAKNTLSIKSIFLDFKEITKAGLAISVLFSSIAGYLLGVNDEHPFKWSVLIVLAIGGYCMVGASNAYNQVIEKDIDSLMDRTKNRPVASGRMSKVTALIVASLLTIIGIVLLYTINAKSAMFAAISIFLYTSIYTPLKTVTSLSVFVGAFPGAIPFMLGWVAATGEFGIEAGTLFLIQFFWQFPHFWSIGWFLYDDYAKAGIFMLPTGNKDRKTALQVILYTIWLIIASLLPVLGYTGQLFISPVAAVLVFLLGLWMLFYAVRLYQLRTPKAARTLMLVSVSYISLLQIVFIVDKFLR.

The next 9 helical transmembrane spans lie at 20–40 (ITKA…YLLG), 49–69 (WSVL…SNAY), 97–117 (VTAL…LYTI), 122–142 (AMFA…LKTV), 145–165 (LSVF…WVAA), 176–196 (LFLI…WFLY), 217–237 (ALQV…PVLG), 242–262 (LFIS…MLFY), and 278–298 (LMLV…VDKF).

The protein belongs to the UbiA prenyltransferase family. Protoheme IX farnesyltransferase subfamily.

The protein localises to the cell inner membrane. It catalyses the reaction heme b + (2E,6E)-farnesyl diphosphate + H2O = Fe(II)-heme o + diphosphate. It functions in the pathway porphyrin-containing compound metabolism; heme O biosynthesis; heme O from protoheme: step 1/1. In terms of biological role, converts heme B (protoheme IX) to heme O by substitution of the vinyl group on carbon 2 of heme B porphyrin ring with a hydroxyethyl farnesyl side group. The protein is Protoheme IX farnesyltransferase of Flavobacterium johnsoniae (strain ATCC 17061 / DSM 2064 / JCM 8514 / BCRC 14874 / CCUG 350202 / NBRC 14942 / NCIMB 11054 / UW101) (Cytophaga johnsonae).